Consider the following 620-residue polypeptide: Glutathione-regulated potassium-efflux system protein KefC (620 aa).

The next 12 helical transmembrane spans lie at 4 to 24 (HTLV…PIAV), 26 to 46 (LGLG…PWGL), 54 to 74 (SILH…GLEL), 90 to 110 (GALQ…LLGL), 114 to 134 (VAEL…MQAM), 149 to 169 (FAVL…IPLL), 178 to 198 (MGAF…VVLL), 218 to 238 (VFSA…EEVG), 270 to 290 (GLLL…GTLL), 294 to 314 (LRIV…LWLI), 327 to 347 (WFAV…GAAQ), and 359 to 379 (SLTL…VILN). Positions 399–518 (QPRVIIAGFG…AGVEKPERET (120 aa)) constitute an RCK N-terminal domain. The interval 597 to 620 (GWQGTEEGKHTGNMADEPETKPSS) is disordered.

The protein belongs to the monovalent cation:proton antiporter 2 (CPA2) transporter (TC 2.A.37) family. KefC subfamily. Homodimer. Interacts with the regulatory subunit KefF.

Its subcellular location is the cell inner membrane. Its function is as follows. Pore-forming subunit of a potassium efflux system that confers protection against electrophiles. Catalyzes K(+)/H(+) antiport. The protein is Glutathione-regulated potassium-efflux system protein KefC of Escherichia coli O139:H28 (strain E24377A / ETEC).